A 452-amino-acid chain; its full sequence is Cell division protein FtsZ (452 aa).

Residues 24-28 (GAGSN), 111-113 (GTG), Glu142, Arg146, and Asp190 contribute to the GTP site.

It belongs to the FtsZ family. In terms of assembly, homodimer. Polymerizes to form a dynamic ring structure in a strictly GTP-dependent manner. Interacts directly with several other division proteins.

The protein resides in the cytoplasm. Functionally, essential cell division protein that forms a contractile ring structure (Z ring) at the future cell division site. The regulation of the ring assembly controls the timing and the location of cell division. One of the functions of the FtsZ ring is to recruit other cell division proteins to the septum to produce a new cell wall between the dividing cells. Binds GTP and shows GTPase activity. This Rickettsia typhi (strain ATCC VR-144 / Wilmington) protein is Cell division protein FtsZ.